The sequence spans 330 residues: 4-hydroxythreonine-4-phosphate dehydrogenase (330 aa).

T133 contacts substrate. Residues H161, H206, and H261 each contribute to the a divalent metal cation site. K269, N278, and R287 together coordinate substrate.

Belongs to the PdxA family. Homodimer. It depends on Zn(2+) as a cofactor. Mg(2+) serves as cofactor. Requires Co(2+) as cofactor.

It is found in the cytoplasm. The catalysed reaction is 4-(phosphooxy)-L-threonine + NAD(+) = 3-amino-2-oxopropyl phosphate + CO2 + NADH. Its pathway is cofactor biosynthesis; pyridoxine 5'-phosphate biosynthesis; pyridoxine 5'-phosphate from D-erythrose 4-phosphate: step 4/5. Its function is as follows. Catalyzes the NAD(P)-dependent oxidation of 4-(phosphooxy)-L-threonine (HTP) into 2-amino-3-oxo-4-(phosphooxy)butyric acid which spontaneously decarboxylates to form 3-amino-2-oxopropyl phosphate (AHAP). In Xylella fastidiosa (strain 9a5c), this protein is 4-hydroxythreonine-4-phosphate dehydrogenase.